The primary structure comprises 269 residues: MISLSDLRKFKAEGRKFSCLTCYDASMAKAMELAEIDTILIGDSLGMAIQGRDSTLPVTVEDMAYHTAAVRRGNQHALIMTDLPFMSYATLKDALQNAKTVMQAGAQMIKIEGGAWLSETVQVLTRNGVPVCVHLGLTPQSVHVFGGYKLQARTREAADQLIADCTAVVEAGAAVLLLECVPAQLGQEIAELFPNTPVIGIGAGNATDGQVLVVQDMLGLTFGRVARFVRNFMKEQSGETAILDAFKAFHAAVQDQSFPAKEHTFQVEL.

Residues aspartate 43 and aspartate 82 each contribute to the Mg(2+) site. 3-methyl-2-oxobutanoate is bound by residues 43–44 (DS), aspartate 82, and lysine 110. Residue glutamate 112 coordinates Mg(2+). Glutamate 179 (proton acceptor) is an active-site residue.

The protein belongs to the PanB family. As to quaternary structure, homodecamer; pentamer of dimers. Mg(2+) serves as cofactor.

It is found in the cytoplasm. The enzyme catalyses 3-methyl-2-oxobutanoate + (6R)-5,10-methylene-5,6,7,8-tetrahydrofolate + H2O = 2-dehydropantoate + (6S)-5,6,7,8-tetrahydrofolate. Its pathway is cofactor biosynthesis; (R)-pantothenate biosynthesis; (R)-pantoate from 3-methyl-2-oxobutanoate: step 1/2. Its function is as follows. Catalyzes the reversible reaction in which hydroxymethyl group from 5,10-methylenetetrahydrofolate is transferred onto alpha-ketoisovalerate to form ketopantoate. This Acinetobacter baumannii (strain SDF) protein is 3-methyl-2-oxobutanoate hydroxymethyltransferase.